The following is a 255-amino-acid chain: Imidazole glycerol phosphate synthase subunit HisF (255 aa).

Residues D12 and D131 contribute to the active site.

Belongs to the HisA/HisF family. As to quaternary structure, heterodimer of HisH and HisF.

It localises to the cytoplasm. The enzyme catalyses 5-[(5-phospho-1-deoxy-D-ribulos-1-ylimino)methylamino]-1-(5-phospho-beta-D-ribosyl)imidazole-4-carboxamide + L-glutamine = D-erythro-1-(imidazol-4-yl)glycerol 3-phosphate + 5-amino-1-(5-phospho-beta-D-ribosyl)imidazole-4-carboxamide + L-glutamate + H(+). Its pathway is amino-acid biosynthesis; L-histidine biosynthesis; L-histidine from 5-phospho-alpha-D-ribose 1-diphosphate: step 5/9. In terms of biological role, IGPS catalyzes the conversion of PRFAR and glutamine to IGP, AICAR and glutamate. The HisF subunit catalyzes the cyclization activity that produces IGP and AICAR from PRFAR using the ammonia provided by the HisH subunit. This is Imidazole glycerol phosphate synthase subunit HisF from Ruthia magnifica subsp. Calyptogena magnifica.